The following is a 27-amino-acid chain: Cupiennin-3c (27 aa).

In terms of tissue distribution, expressed by the venom gland.

Its subcellular location is the secreted. In Cupiennius salei (American wandering spider), this protein is Cupiennin-3c.